Reading from the N-terminus, the 116-residue chain is Protein Wnt-5b (116 aa).

The O-palmitoleoyl serine; by PORCN moiety is linked to residue Ser1. N-linked (GlcNAc...) asparagine glycans are attached at residues Asn69 and Asn83. Cys82 and Cys97 are joined by a disulfide.

Belongs to the Wnt family. In terms of processing, palmitoleoylation is required for efficient binding to frizzled receptors. Depalmitoleoylation leads to Wnt signaling pathway inhibition.

The protein resides in the secreted. It localises to the extracellular space. Its subcellular location is the extracellular matrix. Its function is as follows. Ligand for members of the frizzled family of seven transmembrane receptors. Probable developmental protein. May be a signaling molecule which affects the development of discrete regions of tissues. Is likely to signal over only few cell diameters. This chain is Protein Wnt-5b (WNT-5B), found in Plestiodon skiltonianus (Western skink).